The chain runs to 346 residues: Selenide, water dikinase (346 aa).

Residue selenocysteine 16 is part of the active site. A non-standard amino acid (selenocysteine) is located at residue selenocysteine 16. Residues lysine 19 and 47–49 (TAD) each bind ATP. Aspartate 50 serves as a coordination point for Mg(2+). ATP contacts are provided by residues aspartate 67, aspartate 90, and 138–140 (GHS). Mg(2+) is bound at residue aspartate 90. Aspartate 226 contributes to the Mg(2+) binding site.

This sequence belongs to the selenophosphate synthase 1 family. Class I subfamily. Homodimer. It depends on Mg(2+) as a cofactor.

It carries out the reaction hydrogenselenide + ATP + H2O = selenophosphate + AMP + phosphate + 2 H(+). In terms of biological role, synthesizes selenophosphate from selenide and ATP. This chain is Selenide, water dikinase, found in Haemophilus influenzae (strain ATCC 51907 / DSM 11121 / KW20 / Rd).